The primary structure comprises 461 residues: Coagulation factor IX (461 aa).

Positions 1-28 (MQRVNMIMAESPGLITICLLGYLLSAEC) are cleaved as a signal peptide. The propeptide occupies 29-46 (TVFLDHENANKILNRPKR). Ca(2+) contacts are provided by Tyr-47, Asn-48, Glu-53, Glu-54, Glu-61, Glu-63, Glu-66, Glu-67, Glu-72, Glu-73, and Glu-76. Residues 47-92 (YNSGKLEEFVQGNLERECMEEKCSFEEAREVFENTERTTEFWKQYV) form the Gla domain. Glu-53, Glu-54, Glu-61, Glu-63, Glu-66, Glu-67, Glu-72, Glu-73, Glu-76, Glu-79, and Glu-82 each carry 4-carboxyglutamate. Mg(2+) is bound at residue Glu-61. Residues Cys-64 and Cys-69 are joined by a disulfide bond. Residue Glu-66 coordinates Mg(2+). Glu-72 contributes to the Mg(2+) binding site. Glu-76 lines the Mg(2+) pocket. Residue Glu-82 participates in Ca(2+) binding. Glu-82 contributes to the Mg(2+) binding site. An O-linked (GalNAc...) threonine glycan is attached at Thr-85. 4 residues coordinate Ca(2+): Glu-86, Asp-93, Gly-94, and Gln-96. 4-carboxyglutamate is present on Glu-86. Glu-86 provides a ligand contact to Mg(2+). Residues 93-129 (DGDQCESNPCLNGGSCKDDINSYECWCPFGFEGKNCE) enclose the EGF-like 1; calcium-binding domain. Intrachain disulfides connect Cys-97-Cys-108, Cys-102-Cys-117, Cys-119-Cys-128, Cys-134-Cys-145, Cys-141-Cys-155, Cys-157-Cys-170, Cys-178-Cys-335, Cys-252-Cys-268, Cys-382-Cys-396, and Cys-407-Cys-435. Ser-99 carries O-linked (Glc...) serine glycosylation. Ser-107 carries an O-linked (Fuc...) serine glycan. Ca(2+)-binding residues include Asp-110 and Asp-111. Asp-110 is modified ((3R)-3-hydroxyaspartate). Ser-114 carries the phosphoserine modification. An EGF-like 2 domain is found at 130–171 (LDVTCNIKNGRCEQFCKNSADNKVVCSCTEGYRLAENQKSCE). Residues 192–226 (AETVFPDVDYVNSTEAETILDNITQSTQSFNDFTR) constitute a propeptide, activation peptide. Tyr-201 carries the sulfotyrosine modification. Phosphoserine is present on Ser-204. Thr-205 is modified (phosphothreonine; alternate). Thr-205 carries an O-linked (GalNAc...) threonine; alternate glycan. Asn-213 carries N-linked (GlcNAc...) asparagine glycosylation. O-linked (GalNAc...) threonine glycosylation is found at Thr-215 and Thr-225. Residues 227–459 (VVGGEDAKPG…YVNWIKEKTK (233 aa)) enclose the Peptidase S1 domain. Residue His-267 is the Charge relay system of the active site. Residues Glu-281, Asn-283, Glu-286, Glu-288, and Glu-291 each contribute to the Ca(2+) site. Residue Asp-315 is the Charge relay system of the active site. Ser-411 serves as the catalytic Charge relay system.

Belongs to the peptidase S1 family. As to quaternary structure, heterodimer of a light chain and a heavy chain; disulfide-linked. Interacts (inactive and activated) with F11 (activated) in calcium-dependent manner. Interacts with SERPINC1. Post-translationally, activated by factor XIa, which excises the activation peptide. The propeptide can also be removed by snake venom protease. In terms of processing, the iron and 2-oxoglutarate dependent 3-hydroxylation of aspartate and asparagine is (R) stereospecific within EGF domains. Activated by coagulation factor VIIa-tissue factor (F7-F3) complex in calcium-dependent manner. Predominantly O-glucosylated at Ser-99 by POGLUT1 in vitro.

The protein localises to the secreted. It catalyses the reaction Selective cleavage of Arg-|-Ile bond in factor X to form factor Xa.. Factor IX is a vitamin K-dependent plasma protein that participates in the intrinsic pathway of blood coagulation by converting factor X to its active form in the presence of Ca(2+) ions, phospholipids, and factor VIIIa. This Pan troglodytes (Chimpanzee) protein is Coagulation factor IX (F9).